The chain runs to 446 residues: Putative diacyglycerol O-acyltransferase MT3481 (446 aa).

The active-site Proton acceptor is the H129. The segment at 425 to 446 is disordered; sequence SRALPSAARRGRPSVPTARARH.

It belongs to the long-chain O-acyltransferase family.

It catalyses the reaction an acyl-CoA + a 1,2-diacyl-sn-glycerol = a triacyl-sn-glycerol + CoA. It functions in the pathway glycerolipid metabolism; triacylglycerol biosynthesis. The protein is Putative diacyglycerol O-acyltransferase MT3481 of Mycobacterium tuberculosis (strain CDC 1551 / Oshkosh).